We begin with the raw amino-acid sequence, 219 residues long: Cytidylate kinase (219 aa).

21 to 29 is a binding site for ATP; that stretch reads GPAASGKGT.

This sequence belongs to the cytidylate kinase family. Type 1 subfamily.

Its subcellular location is the cytoplasm. The catalysed reaction is CMP + ATP = CDP + ADP. It carries out the reaction dCMP + ATP = dCDP + ADP. The protein is Cytidylate kinase of Rickettsia rickettsii (strain Iowa).